A 974-amino-acid chain; its full sequence is Kinesin-like protein KIN-7A (974 aa).

The interval 1 to 29 (MTIKTPGTPVSKMDRTPAVTPGGSSRSRE) is disordered. The 323-residue stretch at 31–353 (KIVVTVRLRP…LYFANRAKEV (323 aa)) folds into the Kinesin motor domain. Residue 117-124 (GQTSSGKT) participates in ATP binding. Coiled coils occupy residues 362-435 (VVSD…KGLN) and 565-603 (SANL…VMSL). Disordered regions lie at residues 605–649 (SNIS…PCSP) and 663–713 (NKAP…SSVN). The span at 616–628 (TKNHHHQSKKKKL) shows a compositional bias: basic residues. Polar residues-rich tracts occupy residues 638–649 (NRQNFLKSPCSP) and 666–682 (PQEN…TPQG). Residues 683-693 (SEKETPQKGEE) are compositionally biased toward basic and acidic residues.

This sequence belongs to the TRAFAC class myosin-kinesin ATPase superfamily. Kinesin family. KIN-7 subfamily. Phosphorylated at Thr-145, Thr-687 and Thr-703 by CDKAs and CDKBs. Phosphorylated NACK1 fails to mediate cytokinesis. In terms of tissue distribution, expressed in roots, flowers, pollen mother cells and embryos.

The protein localises to the cytoplasm. It is found in the cytoskeleton. Its subcellular location is the phragmoplast. Probable plus end-directed motor protein that functions in the NACK-PQR (ANP1-MKK6-MPK4) MAP kinase signaling pathway, which is essential for somatic cell cytokinesis, especially for the cell-plate formation and its expansion. Regulates the activity and the localization of ANP1, probably by association through the non-catalytic region of the kinase. Functionally redundant with NACK2 and essential to promote the progression of cytokinesis and for cellularization (formation of the cell plate) during microgametogenesis and megagametogenesis. This Arabidopsis thaliana (Mouse-ear cress) protein is Kinesin-like protein KIN-7A.